The following is a 220-amino-acid chain: Ribosomal RNA small subunit methyltransferase G (220 aa).

S-adenosyl-L-methionine contacts are provided by residues glycine 82, leucine 87, 105–107 (DST), 133–134 (VE), and arginine 147.

Belongs to the methyltransferase superfamily. RNA methyltransferase RsmG family.

The protein localises to the cytoplasm. Its function is as follows. Specifically methylates the N7 position of a guanine in 16S rRNA. In Chlorobium limicola (strain DSM 245 / NBRC 103803 / 6330), this protein is Ribosomal RNA small subunit methyltransferase G.